We begin with the raw amino-acid sequence, 411 residues long: Tyrosine--tRNA ligase (411 aa).

The short motif at 50–59 (PTRPDLHLGH) is the 'HIGH' region element. A 'KMSKS' region motif is present at residues 236 to 240 (KMSKS). ATP is bound at residue lysine 239. In terms of domain architecture, S4 RNA-binding spans 345–409 (VSMAKLVVLA…GKDKFARLVL (65 aa)).

Belongs to the class-I aminoacyl-tRNA synthetase family. TyrS type 2 subfamily. Homodimer.

The protein resides in the cytoplasm. It catalyses the reaction tRNA(Tyr) + L-tyrosine + ATP = L-tyrosyl-tRNA(Tyr) + AMP + diphosphate + H(+). Its function is as follows. Catalyzes the attachment of tyrosine to tRNA(Tyr) in a two-step reaction: tyrosine is first activated by ATP to form Tyr-AMP and then transferred to the acceptor end of tRNA(Tyr). The polypeptide is Tyrosine--tRNA ligase (Deinococcus radiodurans (strain ATCC 13939 / DSM 20539 / JCM 16871 / CCUG 27074 / LMG 4051 / NBRC 15346 / NCIMB 9279 / VKM B-1422 / R1)).